The following is a 97-amino-acid chain: UPF0235 protein LHK_03181 (97 aa).

The protein belongs to the UPF0235 family.

This Laribacter hongkongensis (strain HLHK9) protein is UPF0235 protein LHK_03181.